The primary structure comprises 410 residues: DNA replication and repair protein RecF (410 aa).

30–37 provides a ligand contact to ATP; that stretch reads GPNGHGKT.

Belongs to the RecF family.

It localises to the cytoplasm. Its function is as follows. The RecF protein is involved in DNA metabolism; it is required for DNA replication and normal SOS inducibility. RecF binds preferentially to single-stranded, linear DNA. It also seems to bind ATP. This Rhodococcus opacus (strain B4) protein is DNA replication and repair protein RecF.